Here is a 68-residue protein sequence, read N- to C-terminus: MEC1-mediated checkpoint protein HUG1 (68 aa).

The protein resides in the cytoplasm. It is found in the nucleus. In terms of biological role, involved in the MEC1-mediated checkpoint response to DNA damage and replication arrest. This Saccharomyces cerevisiae (strain ATCC 204508 / S288c) (Baker's yeast) protein is MEC1-mediated checkpoint protein HUG1 (HUG1).